Reading from the N-terminus, the 265-residue chain is Short-chain dehydrogenase/reductase GME11373 (265 aa).

NADP(+) contacts are provided by Ile26, Asp72, Asn99, and Arg132. Residues Ser148 and Ser149 each act as proton donor in the active site. NADP(+) contacts are provided by Tyr163, Lys167, and Thr198. The Proton acceptor role is filled by Tyr163. Lys167 functions as the Lowers pKa of active site Tyr in the catalytic mechanism.

Belongs to the short-chain dehydrogenases/reductases (SDR) family.

It participates in secondary metabolite biosynthesis. In terms of biological role, short-chain dehydrogenase/reductase; part of the gene cluster that mediates the biosynthesis of dibenzodioxocinones such as pestalotiollide B, a novel class of inhibitors against cholesterol ester transfer protein (CEPT). The biosynthesis initiates from condensation of acetate and malonate units catalyzed by the non-reducing PKS pks8/GME11356. Pks8/GME11356 lacks a thioesterase (TE) domain, which is important to the cyclizing of the third ring of atrochrysone carboxylic acid, and the esterase GME11355 might play the role of TE and catalyzes the cyclization reaction of the C ring. The lactamase-like protein GME11357 (or other beta-lactamases in Pestalotiopsis microspora) probably hydrolyzes the thioester bond between the ACP of pks8/GME11356 and the intermediate to release atrochrysone carboxylic acid, which is spontaneously dehydrates to form endocrocin anthrone. Endocrocin anthrone is further converted to emodin via the endocrocin intermediate. Emodin is then oxidized by several enzymes such as the Baeyer-Villiger oxidase GME11358, the oxidoreductase GME11367, the short chain dehydrogenase/reductase GME11373, as well as by other oxidoreductases from the cluster, to modify the A and C rings and open the B ring, and finally yield monodictyphenone. The prenyltransferase GME11375 may catalyze the addition reaction between the C5 side chains and the carbon bone of dibenzodioxocinones. The remaining biochemical reactions to the final product dibenzodioxocinones should be methylation catalyzed by methyltransferase GME11366 and reduction and lactonization reaction catalyzed by a series of oxidordeuctases. The sequence is that of Short-chain dehydrogenase/reductase GME11373 from Pestalotiopsis microspora.